We begin with the raw amino-acid sequence, 478 residues long: Dihydrolipoyl dehydrogenase (478 aa).

Residues 34–49 (EKYIGKEGKVALGGTC), lysine 58, and glycine 122 contribute to the FAD site. A disulfide bridge links cysteine 49 with cysteine 54. NAD(+) is bound by residues 188–192 (GAGVI), glutamate 211, valine 245, and 276–279 (AVGR). FAD contacts are provided by aspartate 319 and alanine 327. Catalysis depends on histidine 451, which acts as the Proton acceptor.

The protein belongs to the class-I pyridine nucleotide-disulfide oxidoreductase family. As to quaternary structure, homodimer. Requires FAD as cofactor.

It is found in the cytoplasm. The enzyme catalyses N(6)-[(R)-dihydrolipoyl]-L-lysyl-[protein] + NAD(+) = N(6)-[(R)-lipoyl]-L-lysyl-[protein] + NADH + H(+). Functionally, the branched-chain alpha-keto dehydrogenase complex catalyzes the overall conversion of alpha-keto acids to acyl-CoA and CO(2). It contains multiple copies of 3 enzymatic components: branched-chain alpha-keto acid decarboxylase (E1), lipoamide acyltransferase (E2) and lipoamide dehydrogenase (E3). In Pseudomonas fluorescens, this protein is Dihydrolipoyl dehydrogenase (lpd).